The primary structure comprises 1819 residues: Non-reducing polyketide synthase 8 (1819 aa).

The region spanning 38–265 (QLTLLSKQKQ…QKIINLPVYG (228 aa)) is the Starter acyltransferase (SAT) domain. The 436-residue stretch at 405–840 (KSSIAIVGMS…GGNTMIAIEE (436 aa)) folds into the Ketosynthase family 3 (KS3) domain. Catalysis depends on for beta-ketoacyl synthase activity residues Cys-578, His-714, and His-758. The region spanning 943–1262 (FAFTGQGASY…SLSTLHCAGA (320 aa)) is the Malonyl-CoA:ACP transacylase (MAT) domain. The segment at 1336-1476 (QRIIEESFDG…GDRSAWLSSW (141 aa)) is N-terminal hotdog fold. The region spanning 1336-1646 (QRIIEESFDG…FRQYPRILLN (311 aa)) is the PKS/mFAS DH domain. His-1368 functions as the Proton acceptor; for dehydratase activity in the catalytic mechanism. Positions 1404-1642 (AMNVADLEVV…GGIKFRQYPR (239 aa)) are dehydratase (DH) domain. A C-terminal hotdog fold region spans residues 1498–1646 (IANRLSHNMA…FRQYPRILLN (149 aa)). The Proton donor; for dehydratase activity role is filled by Asp-1557. The region spanning 1741 to 1818 (VDTNSVASKA…DLRSWLMEYY (78 aa)) is the Carrier domain. Ser-1778 carries the O-(pantetheine 4'-phosphoryl)serine modification.

It depends on pantetheine 4'-phosphate as a cofactor.

It functions in the pathway secondary metabolite biosynthesis. Non-reducing polyketide synthase; part of the gene cluster that mediates the biosynthesis of dibenzodioxocinones such as pestalotiollide B, a novel class of inhibitors against cholesterol ester transfer protein (CEPT). The biosynthesis initiates from condensation of acetate and malonate units catalyzed by the non-reducing PKS pks8/GME11356. Pks8/GME11356 lacks a thioesterase (TE) domain, which is important to the cyclizing of the third ring of atrochrysone carboxylic acid, and the esterase GME11355 might play the role of TE and catalyzes the cyclization reaction of the C ring. The lactamase-like protein GME11357 (or other beta-lactamases in Pestalotiopsis microspora) probably hydrolyzes the thioester bond between the ACP of pks8/GME11356 and the intermediate to release atrochrysone carboxylic acid, which is spontaneously dehydrates to form endocrocin anthrone. Endocrocin anthrone is further converted to emodin via the endocrocin intermediate. Emodin is then oxidized by several enzymes such as the Baeyer-Villiger oxidase GME11358, the oxidoreductase GME11367, the short chain dehydrogenase/reductase GME11373, as well as by other oxidoreductases from the cluster, to modify the A and C rings and open the B ring, and finally yield monodictyphenone. The prenyltransferase GME11375 may catalyze the addition reaction between the C5 side chains and the carbon bone of dibenzodioxocinones. The remaining biochemical reactions to the final product dibenzodioxocinones should be methylation catalyzed by methyltransferase GME11366 and reduction and lactonization reaction catalyzed by a series of oxidordeuctases. The sequence is that of Non-reducing polyketide synthase 8 from Pestalotiopsis microspora.